The primary structure comprises 3969 residues: Histone-lysine N-methyltransferase 2A (3969 aa).

Disordered stretches follow at residues 1-108 (MAHS…LLRV), 132-253 (VFGE…EDSL), and 301-352 (RRRG…RQSP). The short motif at 6 to 25 (RWRFPARPGTTGGGGGGGRR) is the Menin-binding motif (MBM) element. Residues 15-29 (TTGGGGGGGRRGLGG) are compositionally biased toward gly residues. 2 stretches are compositionally biased toward low complexity: residues 59–69 (AVAAAAAAAGS) and 77–104 (GAAA…SGPA). The short motif at 123 to 134 (GTNLRRFRAVFG) is the Integrase domain-binding motif 1 (IBM1) element. A phosphoserine; by CK2 mark is found at S136 and S142. The Integrase domain-binding motif 2 (IBM2) signature appears at 147–152 (QFLGFG). Position 153 is a phosphoserine (S153). A DNA-binding region (a.T hook 1) is located at residues 169–180 (KTSPRKPRGRPR). Phosphoserine is present on S197. Basic and acidic residues-rich tracts occupy residues 202–220 (SETK…SIEK) and 237–253 (HGKD…EDSL). Positions 217–227 (SIEKKRGRPPT) form a DNA-binding region, a.T hook 2. K239 carries the post-translational modification N6-acetyllysine. The segment at residues 301–309 (RRRGRPPST) is a DNA-binding region (a.T hook 3). The segment covering 323 to 347 (ELEKPQKVRKDKEGTPPLTKEDKTV) has biased composition (basic and acidic residues). Position 373 is an N6-acetyllysine (K373). The segment at 445 to 585 (STPNSRFSAP…SSISDHTPWL (141 aa)) is disordered. Residues 452 to 491 (SAPSCGSSEKSSAASQHSSQMSSDSSRSSSPSVDTSTDSQ) are compositionally biased toward low complexity. Residue S518 is modified to Phosphoserine. Over residues 546–559 (LSTLQSAPQQQTSS) the composition is skewed to low complexity. The span at 560-573 (SPPPPLLTPPPPLQ) shows a compositional bias: pro residues. K636 bears the N6-acetyllysine mark. S680 carries the phosphoserine modification. Disordered regions lie at residues 713-780 (ESVT…SSSL), 798-949 (FPSH…TSVT), 1038-1066 (EKSK…VRGP), and 1106-1166 (SSMG…VPED). The segment covering 716-732 (TLPSNRTSAGTSSSGVS) has biased composition (polar residues). Residues 762–780 (LSSSELSPLTPPSSVSSSL) show a composition bias toward low complexity. Residues 798-808 (FPSHSLTQSGE) show a composition bias toward polar residues. The segment covering 820–841 (TSAPAEPFSSSSPTPLFPWFTP) has biased composition (low complexity). At T840 the chain carries Phosphothreonine. The segment covering 846–890 (ERGRNKDKAPEELSKDRDADKSVEKDKSRERDREREKENKRESRK) has biased composition (basic and acidic residues). S926 and S1056 each carry phosphoserine. Residues 1043–1062 (LKQTDQPKAQGQESDSSETS) show a composition bias toward polar residues. Position 1130 is an N6-acetyllysine (K1130). The CXXC-type zinc finger occupies 1147 to 1195 (KKGRRSRRCGQCPGCQVPEDCGVCTNCLDKPKFGGRNIKKQCCKMRKCQ). Positions 1155, 1158, 1161, 1167, 1170, 1173, 1189, and 1194 each coordinate Zn(2+). The tract at residues 1200 to 1375 (MPSKAYLQKQ…PPVNKQENAG (176 aa)) is disordered. Over residues 1220–1232 (SKTSEKKDSKESS) the composition is skewed to basic and acidic residues. Residues 1233 to 1243 (VVKNVVDSSQK) are compositionally biased toward low complexity. Position 1235 is an N6-acetyllysine (K1235). Basic and acidic residues predominate over residues 1248–1273 (AREDPAPKKSSSEPPPRKPVEEKSEE). Over residues 1284–1300 (KQATTPASRKSSKQVSQ) the composition is skewed to polar residues. Residues 1304 to 1313 (VIPPQPPTTG) are compositionally biased toward pro residues. PHD-type zinc fingers lie at residues 1431-1482 (RVVC…CKFC), 1479-1533 (CKFC…CVRC), and 1566-1627 (GNFC…CTER). Positions 1584–1600 (KMMQCGKCDRWVHSKCE) are interaction with histone H3K4me3. The Bromo domain occupies 1635-1765 (ALEKELQISL…SFFIRQMERV (131 aa)). 2 disordered regions span residues 1663-1713 (YRQA…GVKR) and 1806-1869 (QERE…GIED). Positions 1826–1847 (APKPKGPGEPDSPTPLHPPTPP) are enriched in pro residues. The residue at position 1837 (S1837) is a Phosphoserine. The residue at position 1845 (T1845) is a Phosphothreonine. Residue S1858 is modified to Phosphoserine. A C2HC pre-PHD-type zinc finger spans residues 1870 to 1910 (NRQCALCLTYGDDSANDAGRLLYIGQNEWTHVNCALWSAEV). A PHD-type 4 zinc finger spans residues 1931 to 1978 (LRCEFCQKPGATVGCCLTSCTSNYHFMCSRAKNCVFLDDKKVYCQRHR). An FYR N-terminal domain is found at 2018 to 2074 (NIHMMIGSMTIDCLGILNDLSDCEDKLFPIGYQCSRVYWSTTDARKRCVYTCKIVEC). Disordered stretches follow at residues 2081 to 2133 (PDIN…TSGS), 2145 to 2232 (IRTP…TTGT), 2275 to 2333 (NKNS…KLAP), 2373 to 2460 (RGQR…EGNL), 2475 to 2618 (GQRP…RYPR), 2647 to 2675 (FYSS…STSD), and 2713 to 2821 (KISQ…KNLL). Over residues 2095–2115 (IAHSPTSFTESSSKESQNTAE) the composition is skewed to polar residues. S2098 is subject to Phosphoserine. Phosphothreonine is present on T2147. A phosphoserine mark is found at S2151 and S2201. Over residues 2214–2232 (RTGNTYSRNNVSSVSTTGT) the composition is skewed to polar residues. Residues 2283–2302 (SSSSEMKQSSASDLVSKSSS) are compositionally biased toward low complexity. Composition is skewed to polar residues over residues 2310–2319 (VLSSKSSEGS) and 2406–2421 (GMSN…MGSS). The span at 2432 to 2442 (SCKETFKEKHS) shows a compositional bias: basic and acidic residues. Phosphothreonine is present on T2525. A Glycyl lysine isopeptide (Lys-Gly) (interchain with G-Cter in SUMO2) cross-link involves residue K2528. Composition is skewed to polar residues over residues 2543–2563 (SPAS…SASE) and 2573–2592 (PSPN…QNLP). S2611 is modified (phosphoserine). The segment covering 2726–2741 (SDTSVTATTRKSSQIP) has biased composition (polar residues). Over residues 2744–2782 (NGKENGTENLKIDRPEDAGEKEHVTKSSVGHKNEPKMDN) the composition is skewed to basic and acidic residues. Residues 2784–2795 (HSVSRVKTQGQD) show a composition bias toward polar residues. S2796 is modified (phosphoserine). Residues 2796 to 2805 (SLEAQLSSLE) show a composition bias toward low complexity. Residues 2812-2821 (TSTPSDKNLL) show a composition bias toward polar residues. Residues 2847–2855 (SDIMDFVLK) carry the 9aaTAD motif. A Phosphoserine modification is found at S2955. At K2958 the chain carries N6-acetyllysine. Disordered stretches follow at residues 2961 to 3064 (TITE…NAAV) and 3166 to 3244 (PAAT…SNIA). 2 stretches are compositionally biased toward polar residues: residues 2963–2972 (TEKSVASSES) and 3016–3030 (HGNN…STPG). S3036 is subject to Phosphoserine. The span at 3039 to 3064 (VPIQNQKYVPNSTDSPGPSQISNAAV) shows a compositional bias: polar residues. The span at 3171 to 3182 (SSFPPNISNPPS) shows a compositional bias: low complexity. Residues 3198–3216 (VSESSQRTDLSTTVATPSS) are compositionally biased toward polar residues. Residues 3218–3233 (LKKRPISRLQTRKNKK) are compositionally biased toward basic residues. Position 3372 is a phosphothreonine (T3372). An N6-acetyllysine modification is found at K3462. 2 disordered regions span residues 3464-3608 (GIHS…GQPA) and 3620-3643 (TQNP…SNFS). Over residues 3476–3489 (SGPQVSNFTQTVDA) the composition is skewed to polar residues. A compositionally biased stretch (low complexity) spans 3508–3529 (SPTSPGGSPSSPSSGQRSASPS). A phosphoserine mark is found at S3511, S3515, and S3527. The span at 3591–3603 (QDTASVEQSSQKE) shows a compositional bias: polar residues. In terms of domain architecture, FYR C-terminal spans 3666-3747 (KKGLVFEISS…KHCRNYKFRF (82 aa)). The WDR5 interaction motif (WIN) signature appears at 3762–3767 (GSARAE). A disordered region spans residues 3785–3808 (HRQPPEYNPNDEEEEEVQLKSARR). In terms of domain architecture, SET spans 3829–3945 (EAVGVYRSPI…RGEELTYDYK (117 aa)). H3839 and R3841 together coordinate S-adenosyl-L-methionine. C3882 bears the S-methylcysteine; by autocatalysis mark. S-adenosyl-L-methionine contacts are provided by residues Y3883 and 3906 to 3907 (NH). Zn(2+)-binding residues include C3909 and C3957. Residues 3953-3969 (NKLPCNCGAKKCRKFLN) form the Post-SET domain. Position 3958 (N3958) interacts with S-adenosyl-L-methionine. The Zn(2+) site is built by C3959 and C3964.

The protein belongs to the class V-like SAM-binding methyltransferase superfamily. Histone-lysine methyltransferase family. TRX/MLL subfamily. In terms of assembly, MLL cleavage product N320 heterodimerizes with MLL cleavage product C180 (via SET and FYRC domains). Component of some MLL1/MLL complex, at least composed of the core components KMT2A/MLL1, ASH2L, HCFC1/HCF1, HCFC2, WDR5, DPY30 and RBBP5, as well as the facultative components BACC1, CHD8, E2F6, HSP70, INO80C, KANSL1, LAS1L, MAX, MCRS1, MEN1, MGA, KAT8/MOF, PELP1, PHF20, PRP31, RING2, RUVB1/TIP49A, RUVB2/TIP49B, SENP3, TAF1, TAF4, TAF6, TAF7, TAF9 and TEX10. Forms a core complex with the evolutionary conserved subcomplex WRAD composed of WDR5, RBBP5, ASH2L/ASH2 and DPY30 subunits; WRAD differentially stimulates the methyltransferase activity. Interacts (via WIN motif) with WDR5; the interaction is direct. Interaction with WDR5 is required for stable interaction with ASH2L and RBBP5, and thereby also for optimal histone methyltransferase activity. Interacts with KAT8/MOF; the interaction is direct. Interacts with SBF1 and PPP1R15A. Interacts with ZNF335. Interacts with CLOCK and BMAL1 in a circadian manner. Interacts with PPIE; this results in decreased histone H3 methyltransferase activity. Interacts with CREBBP. Interacts with the WRAD complex composed of WDR5, RBBP5, ASH2L and DPY30. Interacts (via MBM motif) with MEN1. Interacts (via IBM motifs) with PSIP1 (via IBD domain) with moderate affinity whereas the KMT2A-MEN1 complex interacts with a greater affinity; MEN1 enhances interaction of KMT2A with PSIP1. Phosphorylation increases its affinity for PSIP1. Forms a complex with CREBBP and CREB1. As to quaternary structure, (Microbial infection) Interacts with herpes virus 8/HHV-8 protein LANA1; this interaction regulates the MLL1 histone methyltransferase activity on viral DNA. In terms of processing, proteolytic cleavage by TASP1 generates MLL cleavage product N320 and MLL cleavage product C180, which reassemble through a non-covalent association. 2 cleavage sites exist, cleavage site 1 (CS1) and cleavage site 2 (CS2), to generate MLL cleavage products N320 and C180. CS2 is the major site. Phosphorylation increases its interaction with PSIP1. Post-translationally, auto-methylated at Cys-3882: auto-methylation is inhibited by the WRAD complex and unmodified histone H3. As to expression, heart, lung, brain and T- and B-lymphocytes.

It localises to the nucleus. It catalyses the reaction L-lysyl(4)-[histone H3] + S-adenosyl-L-methionine = N(6)-methyl-L-lysyl(4)-[histone H3] + S-adenosyl-L-homocysteine + H(+). The catalysed reaction is N(6)-methyl-L-lysyl(4)-[histone H3] + S-adenosyl-L-methionine = N(6),N(6)-dimethyl-L-lysyl(4)-[histone H3] + S-adenosyl-L-homocysteine + H(+). The enzyme catalyses L-cysteinyl-[protein] + S-adenosyl-L-methionine = S-methyl-L-cysteinyl-[protein] + S-adenosyl-L-homocysteine + H(+). Its function is as follows. Histone methyltransferase that plays an essential role in early development and hematopoiesis. Catalytic subunit of the MLL1/MLL complex, a multiprotein complex that mediates both methylation of 'Lys-4' of histone H3 (H3K4me) complex and acetylation of 'Lys-16' of histone H4 (H4K16ac). Catalyzes methyl group transfer from S-adenosyl-L-methionine to the epsilon-amino group of 'Lys-4' of histone H3 (H3K4) via a non-processive mechanism. Part of chromatin remodeling machinery predominantly forms H3K4me1 and H3K4me2 methylation marks at active chromatin sites where transcription and DNA repair take place. Has weak methyltransferase activity by itself, and requires other component of the MLL1/MLL complex to obtain full methyltransferase activity. Has no activity toward histone H3 phosphorylated on 'Thr-3', less activity toward H3 dimethylated on 'Arg-8' or 'Lys-9', while it has higher activity toward H3 acetylated on 'Lys-9'. Binds to unmethylated CpG elements in the promoter of target genes and helps maintain them in the nonmethylated state. Required for transcriptional activation of HOXA9. Promotes PPP1R15A-induced apoptosis. Plays a critical role in the control of circadian gene expression and is essential for the transcriptional activation mediated by the CLOCK-BMAL1 heterodimer. Establishes a permissive chromatin state for circadian transcription by mediating a rhythmic methylation of 'Lys-4' of histone H3 (H3K4me) and this histone modification directs the circadian acetylation at H3K9 and H3K14 allowing the recruitment of CLOCK-BMAL1 to chromatin. Also has auto-methylation activity on Cys-3882 in absence of histone H3 substrate. In Homo sapiens (Human), this protein is Histone-lysine N-methyltransferase 2A (KMT2A).